The primary structure comprises 244 residues: Phosphoadenosine 5'-phosphosulfate reductase (244 aa).

C239 (nucleophile; cysteine thiosulfonate intermediate) is an active-site residue.

It belongs to the PAPS reductase family. CysH subfamily.

The protein resides in the cytoplasm. It carries out the reaction [thioredoxin]-disulfide + sulfite + adenosine 3',5'-bisphosphate + 2 H(+) = [thioredoxin]-dithiol + 3'-phosphoadenylyl sulfate. Its pathway is sulfur metabolism; hydrogen sulfide biosynthesis; sulfite from sulfate: step 3/3. In terms of biological role, catalyzes the formation of sulfite from phosphoadenosine 5'-phosphosulfate (PAPS) using thioredoxin as an electron donor. This is Phosphoadenosine 5'-phosphosulfate reductase from Shigella boydii serotype 4 (strain Sb227).